Reading from the N-terminus, the 1268-residue chain is Vigilin (1268 aa).

Ser-2 carries the post-translational modification N-acetylserine. Phosphothreonine is present on Thr-8. Phosphoserine is present on residues Ser-11, Ser-31, and Ser-35. KH domains lie at 158–229, 230–302, 303–371, 372–442, 443–514, 515–588, 589–660, 661–734, 735–807, 808–880, 881–979, 980–1059, 1060–1134, and 1135–1209; these read PKEH…RLEV, EKAF…AVEV, KKSQ…SVAA, PSWL…EINI, DHKF…DLII, EQRF…SVPI, FKQF…EVSI, PAKL…DIRA, KPEY…SMLV, DPKH…ECAI, PQKF…EVEV, PFDL…SVTV, DPKY…DVPL, and DHRV…ALQV. A phosphothreonine mark is found at Thr-295 and Thr-296. Ser-317 carries the post-translational modification Phosphoserine. Residue Tyr-437 is modified to Phosphotyrosine. Ser-645 is subject to Phosphoserine. Positions 914 to 944 are disordered; sequence ENAVHSTEPVVQENGDEAGEGREAKDCDPGS. The segment covering 932-944 has biased composition (basic and acidic residues); that stretch reads GEGREAKDCDPGS. Lys-991 is modified (N6-acetyllysine). Positions 1233–1268 are disordered; sequence WTASSSEKAPDMSSSEEFPSFGAQVAPKTLPWGPKR. A compositionally biased stretch (polar residues) spans 1234–1249; that stretch reads TASSSEKAPDMSSSEE. Phosphoserine is present on residues Ser-1247 and Ser-1252.

Its subcellular location is the cytoplasm. The protein resides in the nucleus. In terms of biological role, appears to play a role in cell sterol metabolism. It may function to protect cells from over-accumulation of cholesterol. The sequence is that of Vigilin (HDLBP) from Homo sapiens (Human).